Reading from the N-terminus, the 172-residue chain is Protein PLASTID REDOX INSENSITIVE 2, chloroplastic (172 aa).

The transit peptide at 1-54 (MAARLWAAAVAPATLNPPLLTLSASSSPSSSRLRRSVLGRLRSRAPRPADFVCR) directs the protein to the chloroplast.

The protein localises to the plastid. It localises to the chloroplast stroma. Its subcellular location is the chloroplast nucleoid. Functionally, required for the activity of the plastid-encoded RNA polymerase (PEP) and full expression of genes transcribed by PEP. This chain is Protein PLASTID REDOX INSENSITIVE 2, chloroplastic, found in Oryza sativa subsp. japonica (Rice).